Reading from the N-terminus, the 177-residue chain is ATP-dependent protease subunit HslV (177 aa).

Residue Thr-2 is part of the active site. 3 residues coordinate Na(+): Gly-157, Cys-160, and Thr-163.

It belongs to the peptidase T1B family. HslV subfamily. A double ring-shaped homohexamer of HslV is capped on each side by a ring-shaped HslU homohexamer. The assembly of the HslU/HslV complex is dependent on binding of ATP.

Its subcellular location is the cytoplasm. It carries out the reaction ATP-dependent cleavage of peptide bonds with broad specificity.. With respect to regulation, allosterically activated by HslU binding. In terms of biological role, protease subunit of a proteasome-like degradation complex believed to be a general protein degrading machinery. The polypeptide is ATP-dependent protease subunit HslV (Aeromonas hydrophila subsp. hydrophila (strain ATCC 7966 / DSM 30187 / BCRC 13018 / CCUG 14551 / JCM 1027 / KCTC 2358 / NCIMB 9240 / NCTC 8049)).